A 149-amino-acid chain; its full sequence is Calmodulin-3 (149 aa).

Ala-2 carries the post-translational modification N-acetylalanine. EF-hand domains are found at residues 8–43 (DQIA…LGQN), 44–79 (PTEA…KMKD), 81–116 (DSEE…LGEK), and 117–149 (LTDE…MMAK). The Ca(2+) site is built by Asp-21, Asp-23, Asp-25, Cys-27, Glu-32, Asp-57, Asp-59, Asn-61, Thr-63, Glu-68, Asp-94, Asp-96, Asn-98, and Glu-105. N6,N6,N6-trimethyllysine is present on Lys-116. Ca(2+) is bound by residues Asp-130, Asp-132, Asp-134, Gln-136, and Glu-141.

Belongs to the calmodulin family.

Calmodulin mediates the control of a large number of enzymes, ion channels and other proteins by Ca(2+). Among the enzymes to be stimulated by the calmodulin-Ca(2+) complex are a number of protein kinases and phosphatases. This chain is Calmodulin-3 (CAM3), found in Oryza sativa subsp. indica (Rice).